We begin with the raw amino-acid sequence, 382 residues long: Galactokinase (382 aa).

Substrate is bound at residue 34-37; that stretch reads EHTD. 124-130 serves as a coordination point for ATP; that stretch reads GAGLSSS. Mg(2+) is bound by residues Ser-130 and Glu-162. Asp-174 (proton acceptor) is an active-site residue. Position 223 (Tyr-223) interacts with substrate.

It belongs to the GHMP kinase family. GalK subfamily.

It is found in the cytoplasm. It carries out the reaction alpha-D-galactose + ATP = alpha-D-galactose 1-phosphate + ADP + H(+). The protein operates within carbohydrate metabolism; galactose metabolism. Its function is as follows. Catalyzes the transfer of the gamma-phosphate of ATP to D-galactose to form alpha-D-galactose-1-phosphate (Gal-1-P). This Shigella dysenteriae serotype 1 (strain Sd197) protein is Galactokinase.